Consider the following 298-residue polypeptide: MLKIGSHVSMSGKKMLLAASEEAVSYGATTFMIYTGAPQNTRRKPIEELNIEAGRKHMELNGIEEIIVHAPYIINVGNTTKPETFQLGVDFLRMEIERTSALGVAKQIVLHPGAHVGAGADAGIQQIIKGLNEVLTPEQTVNIALETMAGKGTECGRSFEEIAKIIDGVKYNEKLSVCFDTCHTHDAGYDIVNDFDGVLNEFDKIVGIDRLQVLHINDSKNVRGAGKDRHENIGFGHIGYKALHHIVHHPQLMHVPKILETPYVGEDKKDKKPPYKLEIEMLKNGTFDEGLLEKIKAQ.

Positions 69, 111, 146, 180, 183, 215, 228, 230, and 260 each coordinate Zn(2+).

The protein belongs to the AP endonuclease 2 family. It depends on Zn(2+) as a cofactor.

The enzyme catalyses Endonucleolytic cleavage to 5'-phosphooligonucleotide end-products.. Its function is as follows. Endonuclease IV plays a role in DNA repair. It cleaves phosphodiester bonds at apurinic or apyrimidinic (AP) sites, generating a 3'-hydroxyl group and a 5'-terminal sugar phosphate. This is Probable endonuclease 4 from Bacillus cereus (strain B4264).